A 93-amino-acid polypeptide reads, in one-letter code: CRISPR-associated endoribonuclease Cas2 (93 aa).

A Mg(2+)-binding site is contributed by Asp8.

The protein belongs to the CRISPR-associated endoribonuclease Cas2 protein family. Homodimer, forms a heterotetramer with a Cas1 homodimer. It depends on Mg(2+) as a cofactor.

Its function is as follows. CRISPR (clustered regularly interspaced short palindromic repeat), is an adaptive immune system that provides protection against mobile genetic elements (viruses, transposable elements and conjugative plasmids). CRISPR clusters contain sequences complementary to antecedent mobile elements and target invading nucleic acids. CRISPR clusters are transcribed and processed into CRISPR RNA (crRNA). Functions as a ssRNA-specific endoribonuclease. Involved in the integration of spacer DNA into the CRISPR cassette. This chain is CRISPR-associated endoribonuclease Cas2, found in Thermofilum pendens (strain DSM 2475 / Hrk 5).